A 1179-amino-acid chain; its full sequence is Protein FAM83H (1179 aa).

Residues 1–286 (MARRSQSSSQ…LFAQSEPLVP (286 aa)) form a DUF1669 region. The mediates interaction with CSNK1A1 and is required for FAM83H activity in keratin cytoskeleton organization stretch occupies residues 1 to 286 (MARRSQSSSQ…LFAQSEPLVP (286 aa)). Threonine 465 is subject to Phosphothreonine. 2 disordered regions span residues 484-577 (ADPD…GRAG) and 636-669 (FPTKVPVPGPGSGGNGPEREGPEEPGLAKQDSFR). Phosphoserine occurs at positions 513, 514, 516, 523, 647, and 667. Position 756 is a phosphothreonine (threonine 756). Residues serine 759, serine 785, and serine 813 each carry the phosphoserine modification. The disordered stretch occupies residues 830–1026 (RLPSRFLSAQ…RGPRARLSSA (197 aa)). Over residues 836-847 (LSAQSHSTSPQG) the composition is skewed to polar residues. Phosphoserine is present on residues serine 870 and serine 881. Threonine 883 bears the Phosphothreonine mark. Over residues 884 to 906 (PGFSTRRGSPTTGFIEQKGSPTS) the composition is skewed to polar residues. At serine 892 the chain carries Phosphoserine. Threonine 894 carries the post-translational modification Phosphothreonine. Residues serine 903, serine 914, serine 925, serine 936, serine 945, serine 1003, serine 1009, serine 1024, and serine 1025 each carry the phosphoserine modification. Threonine 1040 carries the post-translational modification Phosphothreonine. 2 disordered regions span residues 1047–1084 (ISAHGQKHRAVPAPSPGPTHNSPELGRPPAAGVLAPDM) and 1143–1165 (EEASSPGAGEGPAEEGTRDSKVG). 3 positions are modified to phosphoserine: serine 1048, serine 1068, and serine 1147.

It belongs to the FAM83 family. As to quaternary structure, directly interacts (via DUF1669) with casein kinase isoforms CSNK1A1, CSNK1A1L, CSNK1D and CSNK1E. Interaction with CSNK1A1 recruits CSNK1A1 to keratin filaments. Interacts with KRT18 and probably other keratins. Expressed in the tooth follicle.

The protein localises to the cytoplasm. It is found in the cytoskeleton. Its function is as follows. May play a major role in the structural organization and calcification of developing enamel. May play a role in keratin cytoskeleton disassembly by recruiting CSNK1A1 to keratin filaments. Thereby, it may regulate epithelial cell migration. The sequence is that of Protein FAM83H from Homo sapiens (Human).